We begin with the raw amino-acid sequence, 519 residues long: MCGGQRPLFLLPLLAVCLGAKGRNQEERLLGDLMQGYNPHLRPAEHDSDVVNVSLKLTLTNLISLNEREEALTTNVWIEMQWCDYRLRWDPRDYGGLWVLRVPSTMVWRPDIVLENNVDGVFEVALYCNVLVSPDGCVYWLPPAIFRSSCPVSVTFFPFDWQNCSLIFQSQTYSTNEINLQLSQEDGQTIEWIFIDPEAFTENGEWAIRHRPAKMLLDEAAPAEEAGHQKVVFYLLIQRKPLFYVINIIAPCVLISSVAILIYFLPAKAGGQKCTVAINVLLAQTVFLFLVAKKVPETSQAVPLISKYLTFLLVVTILIVVNAVVVLNVSLRSPHTHSMARGVRKVFLRLLPQLLRMHVRPLAPVAVQDAHPRLQNGSSSGWPITAGEEVALCLPRSELLFRQRQRNGLVRAALEKLEKGPESGQSPEWCGSLKQAAPAIQACVEACNLIARARHQQTHFDSGNKEWFLVGRVLDRVCFLAMLSLFVCGTAGIFLMAHYNRVPALPFPGDPRSYLPSSD.

Positions 1–22 (MCGGQRPLFLLPLLAVCLGAKG) are cleaved as a signal peptide. Residues 23 to 240 (RNQEERLLGD…VVFYLLIQRK (218 aa)) lie on the Extracellular side of the membrane. N-linked (GlcNAc...) asparagine glycosylation is found at asparagine 52 and asparagine 163. An intrachain disulfide couples cysteine 150 to cysteine 164. A run of 3 helical transmembrane segments spans residues 241–265 (PLFY…IYFL), 274–292 (CTVA…FLVA), and 308–329 (YLTF…VLNV). Residues 330–476 (SLRSPHTHSM…WFLVGRVLDR (147 aa)) are Cytoplasmic-facing. Residues 477 to 497 (VCFLAMLSLFVCGTAGIFLMA) traverse the membrane as a helical segment.

The protein belongs to the ligand-gated ion channel (TC 1.A.9) family. Acetylcholine receptor (TC 1.A.9.1) subfamily. Gamma/CHRNG sub-subfamily. Pentamer of two alpha chains, and one each of the beta, delta, and gamma (in immature muscle) or epsilon (in mature muscle) chains.

The protein localises to the postsynaptic cell membrane. It is found in the cell membrane. The catalysed reaction is K(+)(in) = K(+)(out). The enzyme catalyses Na(+)(in) = Na(+)(out). In terms of biological role, after binding acetylcholine, the AChR responds by an extensive change in conformation that affects all subunits and leads to opening of an ion-conducting channel across the plasma membrane. This Bos taurus (Bovine) protein is Acetylcholine receptor subunit gamma (CHRNG).